The chain runs to 207 residues: Thymidine kinase (207 aa).

ATP is bound by residues G15 to S22 and D88 to Q91. E89 serves as the catalytic Proton acceptor. Zn(2+)-binding residues include C145, C148, C183, and H186. Residues R184 to N198 show a composition bias toward basic residues. Residues R184–E207 form a disordered region.

Belongs to the thymidine kinase family. Homotetramer.

The protein resides in the cytoplasm. It carries out the reaction thymidine + ATP = dTMP + ADP + H(+). This is Thymidine kinase from Geobacillus kaustophilus (strain HTA426).